Reading from the N-terminus, the 253-residue chain is MQKLIMGNWKMNGNSTSIKELCSGISQVQYDTSRVAIAVFPSSVYVKEVISQLPEKVGVGLQNITFYDDGAYTGEISARMLEDIGCDYLLIGHSERRSLFAESDEDVFKKLNKIIDTTITPVVCIGESLDDRQSGKLKQVLATQLSLILENLSVEQLAKVVIAYEPVWAIGTGVVASLEQIQETHQFIRSLLAKVDERLAKNIKIVYGGSLKAENAKDILSLPDVDGGLIGGASLKAAEFNEIINQANKICTE.

8–10 (NWK) lines the substrate pocket. The active-site Electrophile is the H93. E165 acts as the Proton acceptor in catalysis. Substrate is bound by residues G171, S210, and 231 to 232 (GG).

The protein belongs to the triosephosphate isomerase family. Homodimer.

The protein localises to the cytoplasm. It carries out the reaction D-glyceraldehyde 3-phosphate = dihydroxyacetone phosphate. It participates in carbohydrate biosynthesis; gluconeogenesis. Its pathway is carbohydrate degradation; glycolysis; D-glyceraldehyde 3-phosphate from glycerone phosphate: step 1/1. In terms of biological role, involved in the gluconeogenesis. Catalyzes stereospecifically the conversion of dihydroxyacetone phosphate (DHAP) to D-glyceraldehyde-3-phosphate (G3P). In Francisella tularensis subsp. tularensis (strain FSC 198), this protein is Triosephosphate isomerase.